Consider the following 538-residue polypeptide: Exo-alpha-bergamotene synthase (538 aa).

Mg(2+) contacts are provided by Asp291, Asp295, Asp435, Thr439, and Glu443. Residues 291–295 (DDIYD) carry the DDXXD motif motif.

This sequence belongs to the terpene synthase family. The cofactor is Mg(2+). Requires Mn(2+) as cofactor.

The enzyme catalyses (2E,6E)-farnesyl diphosphate = (1S,5S,6R)-alpha-bergamotene + diphosphate. In terms of biological role, catalyzes a mixture of sesquiterpenoids from (2E,6E)-farnesyl diphosphate. Catalyzes the formation of exo-alpha-bergamotene, as well as (E)-nerolidol, (Z)-alpha-bisabolene, (E)-beta-farnesene and beta-sesquiphellandrene. Also has activity towards geranyl diphosphate, but to a much lesser extent. This chain is Exo-alpha-bergamotene synthase, found in Lavandula angustifolia (Lavender).